Consider the following 155-residue polypeptide: MAHVIDLQVACTPTKLPTKEQFQLWVDTALAEVSSSPNQDFELTIRLVNNEESQQLNKQYRDKDKPTNVLSFPFEVPDGIELNLLGDLIICIEVMKQEAQEQNKALFEHWAHLVIHGCLHLVGFDHISDTEALEMESIEITILEKLGISNPYLEQ.

Zn(2+)-binding residues include histidine 116, histidine 120, and histidine 126.

Belongs to the endoribonuclease YbeY family. Requires Zn(2+) as cofactor.

The protein localises to the cytoplasm. Single strand-specific metallo-endoribonuclease involved in late-stage 70S ribosome quality control and in maturation of the 3' terminus of the 16S rRNA. The polypeptide is Endoribonuclease YbeY (Colwellia psychrerythraea (strain 34H / ATCC BAA-681) (Vibrio psychroerythus)).